The primary structure comprises 161 residues: Nucleotide-binding protein Sfri_0732 (161 aa).

This sequence belongs to the YajQ family.

Nucleotide-binding protein. In Shewanella frigidimarina (strain NCIMB 400), this protein is Nucleotide-binding protein Sfri_0732.